The primary structure comprises 209 residues: GTP-binding nuclear protein Ran1A (209 aa).

In terms of domain architecture, Small GTPase Ran-type spans 1–162 (NFKLVIVGDG…LYLARKLAGD (162 aa)). 9-16 (DGGTGKTT) is a binding site for GTP. A switch-I region spans residues 28 to 36 (KKYEPTIGV). GTP is bound by residues glycine 59, 113-116 (NKVD), and 141-143 (SAK). The segment at 59–75 (GQEKFGGLRDGYYIHGQ) is switch-II. Residues 187–196 (QHEAELAQAA) are compositionally biased toward low complexity. Residues 187 to 209 (QHEAELAQAASQPLPDDDDDAFD) are disordered.

The protein belongs to the small GTPase superfamily. Ran family. Found in a nuclear export complex with RanGTP, exportin and pre-miRNA.

It localises to the nucleus. Its function is as follows. GTP-binding protein involved in nucleocytoplasmic transport. Required for the import of protein into the nucleus and also for RNA export. Involved in chromatin condensation and control of cell cycle. The protein is GTP-binding nuclear protein Ran1A (RAN1A) of Lotus japonicus (Lotus corniculatus var. japonicus).